A 673-amino-acid chain; its full sequence is DNA ligase (673 aa).

Residues 34–38, 83–84, and E116 each bind NAD(+); these read DAEYD and SL. Residue K118 is the N6-AMP-lysine intermediate of the active site. Residues R139, E176, K293, and K317 each coordinate NAD(+). The Zn(2+) site is built by C411, C414, C429, and C435. Positions 595–673 constitute a BRCT domain; the sequence is NQQNPFFGKT…EDEFLKWVNS (79 aa).

The protein belongs to the NAD-dependent DNA ligase family. LigA subfamily. The cofactor is Mg(2+). It depends on Mn(2+) as a cofactor.

The enzyme catalyses NAD(+) + (deoxyribonucleotide)n-3'-hydroxyl + 5'-phospho-(deoxyribonucleotide)m = (deoxyribonucleotide)n+m + AMP + beta-nicotinamide D-nucleotide.. DNA ligase that catalyzes the formation of phosphodiester linkages between 5'-phosphoryl and 3'-hydroxyl groups in double-stranded DNA using NAD as a coenzyme and as the energy source for the reaction. It is essential for DNA replication and repair of damaged DNA. In Legionella pneumophila subsp. pneumophila (strain Philadelphia 1 / ATCC 33152 / DSM 7513), this protein is DNA ligase.